A 194-amino-acid chain; its full sequence is Glycerol-3-phosphate acyltransferase (194 aa).

The next 5 helical transmembrane spans lie at 7 to 27 (LLMA…YWVC), 59 to 79 (LTLF…AMLG), 86 to 106 (GVTA…HFKG), 116 to 136 (AGLA…AAVV), and 157 to 177 (AWRL…FILI).

This sequence belongs to the PlsY family. In terms of assembly, probably interacts with PlsX.

It is found in the cell inner membrane. The catalysed reaction is an acyl phosphate + sn-glycerol 3-phosphate = a 1-acyl-sn-glycero-3-phosphate + phosphate. The protein operates within lipid metabolism; phospholipid metabolism. Functionally, catalyzes the transfer of an acyl group from acyl-phosphate (acyl-PO(4)) to glycerol-3-phosphate (G3P) to form lysophosphatidic acid (LPA). This enzyme utilizes acyl-phosphate as fatty acyl donor, but not acyl-CoA or acyl-ACP. The sequence is that of Glycerol-3-phosphate acyltransferase from Hahella chejuensis (strain KCTC 2396).